Here is a 411-residue protein sequence, read N- to C-terminus: Translation initiation factor 2 subunit gamma (411 aa).

A tr-type G domain is found at Q9 to K201. The segment at G18 to S25 is G1. Mg(2+)-binding residues include D21, S25, G46, and S48. D21–T26 serves as a coordination point for GTP. Residues G46 to K50 are G2. Residues D88–G91 are G3. GTP is bound by residues N144 to D147 and S179 to Y181. The G4 stretch occupies residues N144–D147. Positions S179–Y181 are G5.

It belongs to the TRAFAC class translation factor GTPase superfamily. Classic translation factor GTPase family. EIF2G subfamily. Heterotrimer composed of an alpha, a beta and a gamma chain. Mg(2+) serves as cofactor.

The enzyme catalyses GTP + H2O = GDP + phosphate + H(+). Its function is as follows. eIF-2 functions in the early steps of protein synthesis by forming a ternary complex with GTP and initiator tRNA. The sequence is that of Translation initiation factor 2 subunit gamma from Thermoplasma acidophilum (strain ATCC 25905 / DSM 1728 / JCM 9062 / NBRC 15155 / AMRC-C165).